Reading from the N-terminus, the 497-residue chain is Zinc finger protein ZIC 2-B (497 aa).

Disordered stretches follow at residues 58–107 and 143–180; these read HMGA…TSQA and SAAA…PQGH. Gly residues predominate over residues 66–88; sequence PGGGSGGGSGGGGGAGPNGGAGA. Residues 97–107 are compositionally biased toward polar residues; it reads PGQTSAFTSQA. Basic residues predominate over residues 161–171; sequence LHHHPHHHHQL. The C2H2-type 1; atypical zinc finger occupies 273-308; sequence LICKWIDPEQLNNPKKSCNKTFSTMHELVTHMSVEH. The segment at 317–344 adopts a C2H2-type 2; atypical zinc-finger fold; the sequence is HICFWEECAREGKPFKAKYKLVNHIRVH. 3 C2H2-type zinc fingers span residues 350–374, 380–404, and 410–432; these read FPCP…KRTH, FQCE…MHVH, and YLCK…MKVH. Residues 423–473 are disordered; it reads SSLRKHMKVHESSPQGSESSPAASSGYESSTPPGLVSPNSETQNPNLSPAA. The segment covering 434-452 has biased composition (low complexity); it reads SSPQGSESSPAASSGYESS. Positions 459 to 469 are enriched in polar residues; it reads SPNSETQNPNL.

Belongs to the GLI C2H2-type zinc-finger protein family.

The protein resides in the nucleus. Its subcellular location is the cytoplasm. Its function is as follows. Transcriptional repressor that inhibits neurogenesis and induces neural and neural crest differentiation. Regulates anteroposterior patterning in early development by inhibiting expression of the nodal genes through the inhibition of vegt. Required for gastrulation movements and for proper anterior neural and axial development. May also act as a transcriptional activator. May bind to the minimal GLI-consensus sequence 5'-TGGGTGGTC-3'. This is Zinc finger protein ZIC 2-B (zic2-b) from Xenopus laevis (African clawed frog).